The sequence spans 507 residues: Dolichyl pyrophosphate Man9GlcNAc2 alpha-1,3-glucosyltransferase (507 aa).

Over 1-2 (ME) the chain is Cytoplasmic. The chain crosses the membrane as a helical span at residues 3 to 23 (SWTWMTVVVLLGLTVRWTVSL). At 24 to 114 (NSYSGAGKPP…SQAHKLFMRT (91 aa)) the chain is on the lumenal side. The N-linked (GlcNAc...) asparagine glycan is linked to Asn-59. A helical transmembrane segment spans residues 115–135 (TVLAADLLIYIPAVLLYCYSL). Over 136 to 143 (KEISPKRK) the chain is Cytoplasmic. A helical membrane pass occupies residues 144 to 164 (IASALCILLYPGLILIDYGHF). Residues 165 to 172 (QYNSVSLG) are Lumenal-facing. The helical transmembrane segment at 173–193 (FALWGVLGVSCDWDLLGSLAF) threads the bilayer. The Cytoplasmic segment spans residues 194–229 (CLALNYKQMELYHSLPFFCFLLGKCFKKGLRGKGSA). Residues 230-250 (LFIRIACTVVASFLLCWLPFL) traverse the membrane as a helical segment. The Lumenal portion of the chain corresponds to 251–297 (TEREHALQVVRRLFPVDRGLFEDKVANIWCSLNVFLKIKDILPRHIQ). A helical membrane pass occupies residues 298–318 (IAISFCFTFLSLLPACIKLTV). The Cytoplasmic segment spans residues 319–332 (QPSAKGFRFTLVSC). A helical membrane pass occupies residues 333 to 353 (ALSFFLFSFQVHEKSILLVSL). Topologically, residues 354–361 (PVCLVLTE) are lumenal. The chain crosses the membrane as a helical span at residues 362–382 (IPFMSTWFLLVSTFSMLPLLL). The Cytoplasmic segment spans residues 383–385 (KDQ). A helical transmembrane segment spans residues 386 to 406 (LLLPSVVTVMAFLIACSTFFP). Residues 407–437 (MFENTSEEQLQLKSFAVSVRRHLPGFTFLPR) are Lumenal-facing. A helical membrane pass occupies residues 438 to 458 (IIQCLFLSSVITMILLTILSV). Residues 459–468 (TLDPPQKLPD) lie on the Cytoplasmic side of the membrane. Residues 469–489 (LFSVLICFVSCVNFVFFLVYF) traverse the membrane as a helical segment. The Lumenal segment spans residues 490-507 (NIVIMWDSKNGRNRKKID).

This sequence belongs to the ALG6/ALG8 glucosyltransferase family.

The protein resides in the endoplasmic reticulum membrane. It carries out the reaction an alpha-D-Man-(1-&gt;2)-alpha-D-Man-(1-&gt;2)-alpha-D-Man-(1-&gt;3)-[alpha-D-Man-(1-&gt;2)-alpha-D-Man-(1-&gt;3)-[alpha-D-Man-(1-&gt;2)-alpha-D-Man-(1-&gt;6)]-alpha-D-Man-(1-&gt;6)]-beta-D-Man-(1-&gt;4)-beta-D-GlcNAc-(1-&gt;4)-alpha-D-GlcNAc-diphospho-di-trans,poly-cis-dolichol + a di-trans,poly-cis-dolichyl beta-D-glucosyl phosphate = an alpha-D-Glc-(1-&gt;3)-alpha-D-Man-(1-&gt;2)-alpha-D-Man-(1-&gt;2)-alpha-D-Man-(1-&gt;3)-[alpha-D-Man-(1-&gt;2)-alpha-D-Man-(1-&gt;3)-[alpha-D-Man-(1-&gt;2)-alpha-D-Man-(1-&gt;6)]-alpha-D-Man-(1-&gt;6)]-beta-D-Man-(1-&gt;4)-beta-D-GlcNAc-(1-&gt;4)-alpha-D-GlcNAc-diphospho-di-trans,poly-cis-dolichol + a di-trans,poly-cis-dolichyl phosphate + H(+). Its pathway is protein modification; protein glycosylation. Functionally, dolichyl pyrophosphate Man9GlcNAc2 alpha-1,3-glucosyltransferase that operates in the biosynthetic pathway of dolichol-linked oligosaccharides, the glycan precursors employed in protein asparagine (N)-glycosylation. The assembly of dolichol-linked oligosaccharides begins on the cytosolic side of the endoplasmic reticulum membrane and finishes in its lumen. The sequential addition of sugars to dolichol pyrophosphate produces dolichol-linked oligosaccharides containing fourteen sugars, including two GlcNAcs, nine mannoses and three glucoses. Once assembled, the oligosaccharide is transferred from the lipid to nascent proteins by oligosaccharyltransferases. In the lumen of the endoplasmic reticulum, adds the first glucose residue from dolichyl phosphate glucose (Dol-P-Glc) onto the lipid-linked oligosaccharide intermediate Man(9)GlcNAc(2)-PP-Dol to produce Glc(1)Man(9)GlcNAc(2)-PP-Dol. Glc(1)Man(9)GlcNAc(2)-PP-Dol is a substrate for ALG8, the following enzyme in the biosynthetic pathway. The protein is Dolichyl pyrophosphate Man9GlcNAc2 alpha-1,3-glucosyltransferase of Rattus norvegicus (Rat).